Consider the following 515-residue polypeptide: Maturase K (515 aa).

This sequence belongs to the intron maturase 2 family. MatK subfamily.

It is found in the plastid. It localises to the chloroplast. Functionally, usually encoded in the trnK tRNA gene intron. Probably assists in splicing its own and other chloroplast group II introns. In Pinus densiflora (Japanese red pine), this protein is Maturase K.